The sequence spans 123 residues: Small ribosomal subunit protein uS12 (123 aa).

Asp-89 is modified (3-methylthioaspartic acid). Positions 101-123 (TLDTQGVKDRRQRRSKYGAKRPK) are disordered. Basic residues predominate over residues 110–123 (RRQRRSKYGAKRPK).

It belongs to the universal ribosomal protein uS12 family. In terms of assembly, part of the 30S ribosomal subunit. Contacts proteins S8 and S17. May interact with IF1 in the 30S initiation complex.

Its function is as follows. With S4 and S5 plays an important role in translational accuracy. Interacts with and stabilizes bases of the 16S rRNA that are involved in tRNA selection in the A site and with the mRNA backbone. Located at the interface of the 30S and 50S subunits, it traverses the body of the 30S subunit contacting proteins on the other side and probably holding the rRNA structure together. The combined cluster of proteins S8, S12 and S17 appears to hold together the shoulder and platform of the 30S subunit. The polypeptide is Small ribosomal subunit protein uS12 (Paramagnetospirillum magneticum (strain ATCC 700264 / AMB-1) (Magnetospirillum magneticum)).